The primary structure comprises 376 residues: Probable inactive protein kinase At3g63330 (376 aa).

Positions 1 to 370 constitute a Protein kinase domain; the sequence is MVERGPTVYL…VDEALQHPYF (370 aa).

The protein belongs to the protein kinase superfamily. Ser/Thr protein kinase family.

In Arabidopsis thaliana (Mouse-ear cress), this protein is Probable inactive protein kinase At3g63330.